A 502-amino-acid chain; its full sequence is Regulator of hypoxia-inducible factor 1 (502 aa).

Helical transmembrane passes span 54–74 (LLAW…VFSC), 92–112 (LDVL…NHTG), 138–158 (IFGA…VLSG), 188–208 (LAPS…NALL), 241–261 (MGYL…PIFL), 272–292 (MALT…YCTA), 335–355 (GPFL…YIMV), 367–387 (LIVA…PNAG), 396–416 (TAVF…ALYF), 437–457 (AYLL…LQAA), and 465–485 (LVLP…YLFI).

As to expression, expressed in intestine, some sensory neurons in the head, body wall muscles and socket cells.

It localises to the endoplasmic reticulum membrane. Functionally, involved in the response to variation in environmental oxygen levels by inhibiting hif-1-mediated gene transcription in a vhl-1-independent manner. Plays a role in susceptibility to killing mediated by P.aeruginosa and by pore-forming toxins produced by B.thuringiensis. Probably by preventing hif-1 transcriptional activity, regulates behavioral responses, such as locomotion speed following acute reoxygenation. Plays a role in normal egg-laying probably by regulating spermatogenesis and in body morphogenesis. The chain is Regulator of hypoxia-inducible factor 1 from Caenorhabditis elegans.